We begin with the raw amino-acid sequence, 1450 residues long: ABC transporter G family member 37 (1450 aa).

Residues 158–431 (GNALHILPNK…FEFMGFRCPA (274 aa)) form the ABC transporter 1 domain. 191 to 198 (GPPGSGKT) contributes to the ATP binding site. One can recognise an ABC transmembrane type-2 1 domain in the interval 509–721 (ELLKATIDRE…AQNAISTNEF (213 aa)). Helical transmembrane passes span 527–547 (FMYI…MTTF), 559–579 (GMIY…NGFA), 614–634 (IPIT…VIGF), 646–666 (LLLL…AGIG), 670–690 (VVSH…GGFI), and 756–776 (IGLG…TVAL). The 253-residue stretch at 852 to 1104 (ISFNDVRYSV…KLIEYFEGID (253 aa)) folds into the ABC transporter 2 domain. 897-904 (GVSGAGKT) provides a ligand contact to ATP. An ABC transmembrane type-2 2 domain is found at 1177–1391 (TQCLACLWKQ…TLYGLVASQF (215 aa)). The next 7 membrane-spanning stretches (helical) occupy residues 1198–1218 (AVRL…FWNL), 1236–1256 (YAAV…VVVV), 1284–1304 (LPYI…MIGF), 1311–1331 (FLWY…YGMM), 1341–1361 (IAAI…GYLI), 1372–1392 (WYCW…SQFG), and 1422–1442 (VVAV…SFAI).

This sequence belongs to the ABC transporter superfamily. ABCG family. PDR (TC 3.A.1.205) subfamily.

It localises to the membrane. In terms of biological role, may be a general defense protein. The polypeptide is ABC transporter G family member 37 (Oryza sativa subsp. japonica (Rice)).